The chain runs to 228 residues: Vesicle transport protein SEC20 (228 aa).

The Cytoplasmic portion of the chain corresponds to 1–199 (MAAPQDVHVR…LITKYNRREL (199 aa)). Positions 37–90 (LSELTELNTKVKEKFQQLKQRIQELEQSAREQDKESEKQLLLQEVENHKKQMLS) form a coiled coil. The chain crosses the membrane as a helical; Anchor for type IV membrane protein span at residues 200 to 220 (TDKLLIFLALALFLATVLYIV). The Lumenal segment spans residues 221–228 (KKRLFPFL).

This sequence belongs to the SEC20 family. Component of a SNARE complex consisting of STX18, USE1L, BNIP1/SEC20L and SEC22B. Interacts directly with STX18, RINT1/TIP20L and NAPA. Interacts with ZW10 through RINT1. Interacts with BCL2. Interacts with RNF186. Interacts with RNF185. Interacts with SQSTM1; increased by 'Lys-63'-linked polyubiquitination of BNIP1. Post-translationally, polyubiquitinated. 'Lys-63'-linked polyubiquitination by RNF185 increases the interaction with the autophagy receptor SQSTM1. Undergoes 'Lys-29'- and 'Lys-63'-linked polyubiquitination by RNF186 that may regulate BNIP1 localization to the mitochondrion.

The protein localises to the endoplasmic reticulum membrane. The protein resides in the mitochondrion membrane. Its function is as follows. As part of a SNARE complex may be involved in endoplasmic reticulum membranes fusion and be required for the maintenance of endoplasmic reticulum organization. Also plays a role in apoptosis. It is for instance required for endoplasmic reticulum stress-induced apoptosis. As a substrate of RNF185 interacting with SQSTM1, might also be involved in mitochondrial autophagy. The chain is Vesicle transport protein SEC20 from Mus musculus (Mouse).